The primary structure comprises 549 residues: Cation/acetate symporter ActP (549 aa).

13 helical membrane passes run Trp-33 to Ala-53, Leu-77 to Phe-97, Gly-103 to Glu-123, Ile-148 to Gly-168, Ile-183 to Ala-203, Trp-206 to Val-226, Ile-262 to Leu-282, Gly-303 to Val-323, Leu-355 to Leu-375, Val-404 to Glu-424, Ile-428 to Leu-448, Gly-464 to Val-484, and Ile-493 to Phe-513.

It belongs to the sodium:solute symporter (SSF) (TC 2.A.21) family.

Its subcellular location is the cell inner membrane. In terms of biological role, transports acetate. This Escherichia coli O8 (strain IAI1) protein is Cation/acetate symporter ActP.